The primary structure comprises 345 residues: RNA pseudouridine synthase 1 (345 aa).

Aspartate 134 is a catalytic residue.

The protein belongs to the pseudouridine synthase RluA family.

It catalyses the reaction a uridine in RNA = a pseudouridine in RNA. In Oryza sativa subsp. japonica (Rice), this protein is RNA pseudouridine synthase 1.